An 855-amino-acid polypeptide reads, in one-letter code: Potassium channel AKT2 (855 aa).

The segment covering 1–12 (MKTSSFESASSS) has biased composition (low complexity). Residues 1 to 24 (MKTSSFESASSSGGSGGGGGGGGG) form a disordered region. Residues 1–75 (MKTSSFESAS…PLDSRYRCWD (75 aa)) lie on the Cytoplasmic side of the membrane. Over residues 13–24 (GGSGGGGGGGGG) the composition is skewed to gly residues. The helical transmembrane segment at 76–96 (TFMVVLVAYSAWVYPFEVAFM) threads the bilayer. Residues 97–105 (NASPKGGLE) are Extracellular-facing. A helical transmembrane segment spans residues 106-126 (VADIVVDLFFAVDIVLTFFVA). Residues 127-149 (YIDSRTQLLVRDRRRIATRYLST) lie on the Cytoplasmic side of the membrane. The chain crosses the membrane as a helical span at residues 150–170 (FFIMDVASTIPFQGLAYIVTG). At 171 to 179 (EVRESPAFS) the chain is on the extracellular side. Residues 180 to 200 (LLGILRLWRLRKVKQFFTRLE) form a helical; Voltage-sensor membrane-spanning segment. Residues 201-214 (KDIRFNYFWIRCAR) are Cytoplasmic-facing. The chain crosses the membrane as a helical span at residues 215–235 (LIAVTLFLVHCAGCLYYLIAD). Over 236–262 (RYPHREKTWIGAVIPDFQEASLWIRYT) the chain is Extracellular. The segment at residues 263–282 (SSVYWSITTMTTVGYGDMHA) is an intramembrane region (pore-forming). The Extracellular segment spans residues 283–285 (QNT). The helical transmembrane segment at 286 to 306 (VEMIFNIFYMLFNLGLTAYLI) threads the bilayer. Topologically, residues 307-855 (GNMTNLVVEG…VASMDSVSGS (549 aa)) are cytoplasmic. 391 to 511 (LFKGVSREVL…VVIIKNFLKH (121 aa)) serves as a coordination point for a nucleoside 3',5'-cyclic phosphate. ANK repeat units lie at residues 536–565 (NIPC…DPDV), 569–598 (KGRT…NVNI), 602–631 (QGNT…VSSP), 634–663 (AAGD…AVDS), and 667–696 (DGAT…SVDR). The tract at residues 744-765 (EVGSSGDSRNGRRQSARSDGAH) is disordered. One can recognise a KHA domain in the interval 768–855 (RVSIYRGHPF…VASMDSVSGS (88 aa)).

The protein belongs to the potassium channel family. Plant (TC 1.A.1.4) subfamily. In terms of assembly, the potassium channel is probably a homo- or heterotetrameric complex of pore-forming subunits.

The protein localises to the membrane. Probable inward-rectifying potassium channel. Assuming opened or closed conformations in response to the voltage difference across the membrane, the channel is activated by hyperpolarization. The polypeptide is Potassium channel AKT2 (Oryza sativa subsp. japonica (Rice)).